The chain runs to 191 residues: Thioredoxin F-type, chloroplastic (191 aa).

The Thioredoxin domain maps to Lys-68–Ser-190. Catalysis depends on nucleophile residues Cys-115 and Cys-118. A disulfide bridge links Cys-115 with Cys-118.

This sequence belongs to the thioredoxin family. Plant F-type subfamily. As to quaternary structure, forms a complex with heterodimeric ferredoxin-thioredoxin reductase (FTR) and ferredoxin.

It localises to the plastid. Its subcellular location is the chloroplast. Its function is as follows. Participates in various redox reactions through the reversible oxidation of the active center dithiol to a disulfide. The F form is known to activate a number of enzymes of the photosynthetic carbon cycle. In Mesembryanthemum crystallinum (Common ice plant), this protein is Thioredoxin F-type, chloroplastic.